The primary structure comprises 59 residues: Large ribosomal subunit protein uL30 (59 aa).

It belongs to the universal ribosomal protein uL30 family. In terms of assembly, part of the 50S ribosomal subunit.

The protein is Large ribosomal subunit protein uL30 of Staphylococcus haemolyticus (strain JCSC1435).